The following is a 49-amino-acid chain: Large ribosomal subunit protein bL33 (49 aa).

It belongs to the bacterial ribosomal protein bL33 family.

In Thermotoga maritima (strain ATCC 43589 / DSM 3109 / JCM 10099 / NBRC 100826 / MSB8), this protein is Large ribosomal subunit protein bL33 (rpmG).